The sequence spans 490 residues: Protein nucleotidyltransferase YdiU (490 aa).

ATP contacts are provided by glycine 94, glycine 96, arginine 97, lysine 117, aspartate 129, glycine 130, arginine 180, and arginine 187. The active-site Proton acceptor is aspartate 256. Positions 257 and 266 each coordinate Mg(2+). Aspartate 266 lines the ATP pocket.

This sequence belongs to the SELO family. Mg(2+) is required as a cofactor. It depends on Mn(2+) as a cofactor.

The enzyme catalyses L-seryl-[protein] + ATP = 3-O-(5'-adenylyl)-L-seryl-[protein] + diphosphate. The catalysed reaction is L-threonyl-[protein] + ATP = 3-O-(5'-adenylyl)-L-threonyl-[protein] + diphosphate. It carries out the reaction L-tyrosyl-[protein] + ATP = O-(5'-adenylyl)-L-tyrosyl-[protein] + diphosphate. It catalyses the reaction L-histidyl-[protein] + UTP = N(tele)-(5'-uridylyl)-L-histidyl-[protein] + diphosphate. The enzyme catalyses L-seryl-[protein] + UTP = O-(5'-uridylyl)-L-seryl-[protein] + diphosphate. The catalysed reaction is L-tyrosyl-[protein] + UTP = O-(5'-uridylyl)-L-tyrosyl-[protein] + diphosphate. Its function is as follows. Nucleotidyltransferase involved in the post-translational modification of proteins. It can catalyze the addition of adenosine monophosphate (AMP) or uridine monophosphate (UMP) to a protein, resulting in modifications known as AMPylation and UMPylation. The protein is Protein nucleotidyltransferase YdiU of Clostridium perfringens (strain 13 / Type A).